The following is a 374-amino-acid chain: Alanine racemase (374 aa).

K34 (proton acceptor; specific for D-alanine) is an active-site residue. At K34 the chain carries N6-(pyridoxal phosphate)lysine. R138 is a substrate binding site. The active-site Proton acceptor; specific for L-alanine is Y265. A substrate-binding site is contributed by M313.

It belongs to the alanine racemase family. Requires pyridoxal 5'-phosphate as cofactor.

The enzyme catalyses L-alanine = D-alanine. It functions in the pathway amino-acid biosynthesis; D-alanine biosynthesis; D-alanine from L-alanine: step 1/1. Its function is as follows. Catalyzes the interconversion of L-alanine and D-alanine. May also act on other amino acids. This chain is Alanine racemase (alr), found in Hahella chejuensis (strain KCTC 2396).